The sequence spans 1516 residues: UDP-glucose:glycoprotein glucosyltransferase 2 (1516 aa).

The signal sequence occupies residues 1-27; it reads MAPAKATNVVRLLLGSTALWLSQLGSG. N-linked (GlcNAc...) asparagine glycans are attached at residues asparagine 256, asparagine 286, asparagine 920, and asparagine 950. Residues 1220–1516 are glucosyltransferase; that stretch reads LHKENKKEKD…QDTILTHDEL (297 aa). At tyrosine 1289 the chain carries Phosphotyrosine. Residues 1513-1516 carry the Prevents secretion from ER motif; it reads HDEL.

Belongs to the glycosyltransferase 8 family. In terms of assembly, interacts with METTL23. Interacts with SELENOF. Ca(2+) serves as cofactor. The cofactor is Mn(2+). Higher levels in kidney, pancreas, heart, and skeletal muscle.

It localises to the endoplasmic reticulum lumen. The protein localises to the endoplasmic reticulum-Golgi intermediate compartment. It carries out the reaction N(4)-(alpha-D-Man-(1-&gt;2)-alpha-D-Man-(1-&gt;2)-alpha-D-Man-(1-&gt;3)-[alpha-D-Man-(1-&gt;2)-alpha-D-Man-(1-&gt;3)-[alpha-D-Man-(1-&gt;2)-alpha-D-Man-(1-&gt;6)]-alpha-D-Man-(1-&gt;6)]-beta-D-Man-(1-&gt;4)-beta-D-GlcNAc-(1-&gt;4)-beta-D-GlcNAc)-L-asparaginyl-[protein] (N-glucan mannose isomer 9A1,2,3B1,2,3) + UDP-alpha-D-glucose = N(4)-(alpha-D-Glc-(1-&gt;3)-alpha-D-Man-(1-&gt;2)-alpha-D-Man-(1-&gt;2)-alpha-D-Man-(1-&gt;3)-[alpha-D-Man-(1-&gt;2)-alpha-D-Man-(1-&gt;3)-[alpha-D-Man-(1-&gt;2)-alpha-D-Man-(1-&gt;6)]-alpha-D-Man-(1-&gt;6)]-beta-D-Man-(1-&gt;4)-beta-D-GlcNAc-(1-&gt;4)-beta-D-GlcNAc)-L-asparaginyl-[protein] + UDP + H(+). The protein operates within protein modification; protein glycosylation. With respect to regulation, ethylenediaminetetraacetic acid completely abolishes catalytic activity. Catalytic activity is enhanced by complex formation with SELENOF. Functionally, recognizes glycoproteins with minor folding defects. Reglucosylates single N-glycans near the misfolded part of the protein, thus providing quality control for protein folding in the endoplasmic reticulum. Reglucosylated proteins are recognized by calreticulin for recycling to the endoplasmic reticulum and refolding or degradation. The protein is UDP-glucose:glycoprotein glucosyltransferase 2 (UGGT2) of Homo sapiens (Human).